A 545-amino-acid polypeptide reads, in one-letter code: ATP synthase subunit alpha (545 aa).

ATP is bound at residue 173–180 (GDRQTGKS).

Belongs to the ATPase alpha/beta chains family. As to quaternary structure, F-type ATPases have 2 components, CF(1) - the catalytic core - and CF(0) - the membrane proton channel. CF(1) has five subunits: alpha(3), beta(3), gamma(1), delta(1), epsilon(1). CF(0) has three main subunits: a(1), b(2) and c(9-12). The alpha and beta chains form an alternating ring which encloses part of the gamma chain. CF(1) is attached to CF(0) by a central stalk formed by the gamma and epsilon chains, while a peripheral stalk is formed by the delta and b chains.

The protein localises to the cell membrane. It catalyses the reaction ATP + H2O + 4 H(+)(in) = ADP + phosphate + 5 H(+)(out). Functionally, produces ATP from ADP in the presence of a proton gradient across the membrane. The alpha chain is a regulatory subunit. The sequence is that of ATP synthase subunit alpha from Pseudarthrobacter chlorophenolicus (strain ATCC 700700 / DSM 12829 / CIP 107037 / JCM 12360 / KCTC 9906 / NCIMB 13794 / A6) (Arthrobacter chlorophenolicus).